The sequence spans 236 residues: Biosynthetic peptidoglycan transglycosylase (236 aa).

Residues 12–31 traverse the membrane as a helical segment; it reads ALFWFAAGSIVLVLVFRWVP.

It belongs to the glycosyltransferase 51 family.

It is found in the cell inner membrane. The enzyme catalyses [GlcNAc-(1-&gt;4)-Mur2Ac(oyl-L-Ala-gamma-D-Glu-L-Lys-D-Ala-D-Ala)](n)-di-trans,octa-cis-undecaprenyl diphosphate + beta-D-GlcNAc-(1-&gt;4)-Mur2Ac(oyl-L-Ala-gamma-D-Glu-L-Lys-D-Ala-D-Ala)-di-trans,octa-cis-undecaprenyl diphosphate = [GlcNAc-(1-&gt;4)-Mur2Ac(oyl-L-Ala-gamma-D-Glu-L-Lys-D-Ala-D-Ala)](n+1)-di-trans,octa-cis-undecaprenyl diphosphate + di-trans,octa-cis-undecaprenyl diphosphate + H(+). The protein operates within cell wall biogenesis; peptidoglycan biosynthesis. Peptidoglycan polymerase that catalyzes glycan chain elongation from lipid-linked precursors. This is Biosynthetic peptidoglycan transglycosylase from Pseudomonas putida (strain W619).